Reading from the N-terminus, the 223-residue chain is Killer cell lectin-like receptor subfamily B member 1B allele C (223 aa).

At 1–45 the chain is on the cytoplasmic side; sequence MDTAVVYADLHLARTGEPKRESPPSLSPDTCQCPRWHRLALKLGC. The ITIM motif motif lies at 5 to 10; sequence VVYADL. An LCK-binding motif motif is present at residues 31 to 34; the sequence is CQCP. A helical; Signal-anchor for type II membrane protein transmembrane segment spans residues 46 to 66; that stretch reads ACFILLVLSVIGLGVLVLTLL. The Extracellular segment spans residues 67–223; sequence QKPLLQNSPA…LKRESTCNDS (157 aa). Positions 101–211 constitute a C-type lectin domain; sequence HRDKCFHVSQ…CDSDNIWICQ (111 aa). Disulfide bonds link C122-C210 and C189-C202.

As to quaternary structure, homodimer; disulfide-linked. Interacts with tyrosine kinase LCK. Binds PTPN6/SHP-1 in a phosphorylation-dependent manner. Expressed in a subset of natural killer cells.

The protein localises to the membrane. Its function is as follows. Receptor for CLEC2D/OCIL. Ligand-binding contributes to inhibition of cytotoxic natural killer (NK) cells. May mediate MHC class I-independent 'missing-self' recognition of allografts, tumor cells and virus-infected cells. In Rattus norvegicus (Rat), this protein is Killer cell lectin-like receptor subfamily B member 1B allele C.